A 277-amino-acid chain; its full sequence is Tryptophan synthase alpha chain (277 aa).

Catalysis depends on proton acceptor residues E50 and D61.

It belongs to the TrpA family. Tetramer of two alpha and two beta chains.

It carries out the reaction (1S,2R)-1-C-(indol-3-yl)glycerol 3-phosphate + L-serine = D-glyceraldehyde 3-phosphate + L-tryptophan + H2O. The protein operates within amino-acid biosynthesis; L-tryptophan biosynthesis; L-tryptophan from chorismate: step 5/5. Its function is as follows. The alpha subunit is responsible for the aldol cleavage of indoleglycerol phosphate to indole and glyceraldehyde 3-phosphate. This chain is Tryptophan synthase alpha chain, found in Beijerinckia indica subsp. indica (strain ATCC 9039 / DSM 1715 / NCIMB 8712).